The primary structure comprises 51 residues: Insulin (51 aa).

3 disulfide bridges follow: C8/C37, C20/C50, and C36/C41.

It belongs to the insulin family. In terms of assembly, heterodimer of a B chain and an A chain linked by two disulfide bonds.

Its subcellular location is the secreted. Insulin decreases blood glucose concentration. It increases cell permeability to monosaccharides, amino acids and fatty acids. It accelerates glycolysis, the pentose phosphate cycle, and glycogen synthesis in liver. This is Insulin from Pagrus major (Red sea bream).